A 357-amino-acid polypeptide reads, in one-letter code: EGF-like domain-containing protein 2 (357 aa).

The first 20 residues, 1 to 20, serve as a signal peptide directing secretion; the sequence is MPPSLSHLFLLSTFASLALC. EGF-like domains are found at residues 21–55 and 61–93; these read SFYC…FNCG and ISAA…PTCQ. 6 disulfide bridges follow: cysteine 24/cysteine 37, cysteine 31/cysteine 43, cysteine 45/cysteine 54, cysteine 65/cysteine 75, cysteine 69/cysteine 81, and cysteine 83/cysteine 92.

As to expression, prismatic layer of shell (at protein level). Expressed primarily in the mantle with highest level in the mantle edge and lower level in the mantle pallium.

The protein localises to the secreted. The chain is EGF-like domain-containing protein 2 from Pinctada maxima (Silver-lipped pearl oyster).